The sequence spans 221 residues: uncharacterized protein (221 aa).

The disordered stretch occupies residues 1 to 22 (MGLDNFTAPSTGTTPAGSPFLR). A compositionally biased stretch (polar residues) spans 7–16 (TAPSTGTTPA).

This sequence belongs to the IIV-6 259R family.

This is an uncharacterized protein from Invertebrate iridescent virus 3 (IIV-3).